The primary structure comprises 78 residues: D-alanyl carrier protein (78 aa).

Residues 1–78 form the Carrier domain; it reads MAFRENVLEI…MIITQLEALK (78 aa). O-(pantetheine 4'-phosphoryl)serine is present on serine 36.

The protein belongs to the DltC family. In terms of processing, 4'-phosphopantetheine is transferred from CoA to a specific serine of apo-DCP.

It localises to the cytoplasm. It functions in the pathway cell wall biogenesis; lipoteichoic acid biosynthesis. In terms of biological role, carrier protein involved in the D-alanylation of lipoteichoic acid (LTA). The loading of thioester-linked D-alanine onto DltC is catalyzed by D-alanine--D-alanyl carrier protein ligase DltA. The DltC-carried D-alanyl group is further transferred to cell membrane phosphatidylglycerol (PG) by forming an ester bond, probably catalyzed by DltD. D-alanylation of LTA plays an important role in modulating the properties of the cell wall in Gram-positive bacteria, influencing the net charge of the cell wall. This is D-alanyl carrier protein from Listeria monocytogenes serotype 4b (strain CLIP80459).